The chain runs to 126 residues: 13 kDa ribonucleoprotein-associated protein (126 aa).

Belongs to the eukaryotic ribosomal protein eL8 family. As to quaternary structure, component of the U3 snoRNP particle. Binds to the C'/D and B/C motifs in U3 snoRNA. Component of the 25S U4/U6.U5 tri-snRNP particle, a subcomplex of the spliceosome. Binds to the 5' stem-loop of U4 snRNA.

It localises to the nucleus. It is found in the nucleolus. Its function is as follows. Common component of the spliceosome and rRNA processing machinery. In association with the spliceosomal U4/U6.U5 tri-snRNP particle, required for splicing of pre-mRNA. In association with box C/D snoRNPs, required for processing of pre-ribosomal RNA (rRNA) and site-specific 2'-O-methylation of substrate RNAs. Essential for the accumulation and stability of U4 snRNA, U6 snRNA, and box C/D snoRNAs. This is 13 kDa ribonucleoprotein-associated protein (SNU13) from Candida albicans (strain SC5314 / ATCC MYA-2876) (Yeast).